The chain runs to 49 residues: Large ribosomal subunit protein bL33 (49 aa).

This sequence belongs to the bacterial ribosomal protein bL33 family.

This is Large ribosomal subunit protein bL33 from Pelotomaculum thermopropionicum (strain DSM 13744 / JCM 10971 / SI).